Reading from the N-terminus, the 311-residue chain is DNA replication terminus site-binding protein (311 aa).

The protein belongs to the Tus family.

It is found in the cytoplasm. In terms of biological role, trans-acting protein required for termination of DNA replication. Binds to DNA replication terminator sequences (terA to terF) to prevent the passage of replication forks. The termination efficiency will be affected by the affinity of this protein for the terminator sequence. The sequence is that of DNA replication terminus site-binding protein from Yersinia pseudotuberculosis serotype I (strain IP32953).